The chain runs to 384 residues: Chaperone protein DnaJ (384 aa).

Residues 4–68 enclose the J domain; the sequence is DFYEILGVSR…EKRQMYDQMG (65 aa). 2 disordered regions span residues 29-60 and 73-131; these read REYH…DEEK and EQAE…GQDL. The span at 42 to 60 shows a compositional bias: basic and acidic residues; sequence EEKFKQAKKAKEVLTDEEK. Over residues 80 to 101 the composition is skewed to gly residues; that stretch reads GAGGGGGRGGMGGDPFGGGAGG. Residues 102 to 111 show a composition bias toward low complexity; sequence FDMQDIFDQF. Residues 112 to 121 show a composition bias toward gly residues; the sequence is FGGGGRGGRG. The segment at 145-227 adopts a CR-type zinc-finger fold; that stretch reads GATKQLNVTR…CRGNGVVQND (83 aa). The Zn(2+) site is built by Cys-158, Cys-161, Cys-175, and Cys-178. 4 CXXCXGXG motif repeats span residues 158-165, 175-182, 201-208, and 215-222; these read CDDCDGAG, CPECNGQG, CRRCDGEG, and CSTCRGNG. Residues 160-191 are disordered; sequence DCDGAGHPPGADSETCPECNGQGQTTQVQQTP. The span at 180-190 shows a compositional bias: low complexity; it reads GQGQTTQVQQT. Residues Cys-201, Cys-204, Cys-215, and Cys-218 each contribute to the Zn(2+) site.

It belongs to the DnaJ family. Homodimer. It depends on Zn(2+) as a cofactor.

The protein resides in the cytoplasm. In terms of biological role, participates actively in the response to hyperosmotic and heat shock by preventing the aggregation of stress-denatured proteins and by disaggregating proteins, also in an autonomous, DnaK-independent fashion. Unfolded proteins bind initially to DnaJ; upon interaction with the DnaJ-bound protein, DnaK hydrolyzes its bound ATP, resulting in the formation of a stable complex. GrpE releases ADP from DnaK; ATP binding to DnaK triggers the release of the substrate protein, thus completing the reaction cycle. Several rounds of ATP-dependent interactions between DnaJ, DnaK and GrpE are required for fully efficient folding. Also involved, together with DnaK and GrpE, in the DNA replication of plasmids through activation of initiation proteins. In Haloarcula marismortui (strain ATCC 43049 / DSM 3752 / JCM 8966 / VKM B-1809) (Halobacterium marismortui), this protein is Chaperone protein DnaJ.